The chain runs to 252 residues: 3-dehydroquinate dehydratase (252 aa).

Residues S21, 46 to 48, and R82 each bind 3-dehydroquinate; that span reads EWR. H143 acts as the Proton donor/acceptor in catalysis. K170 serves as the catalytic Schiff-base intermediate with substrate. 3-dehydroquinate is bound by residues R213, S232, and Q236.

It belongs to the type-I 3-dehydroquinase family. Homodimer.

It catalyses the reaction 3-dehydroquinate = 3-dehydroshikimate + H2O. It participates in metabolic intermediate biosynthesis; chorismate biosynthesis; chorismate from D-erythrose 4-phosphate and phosphoenolpyruvate: step 3/7. Involved in the third step of the chorismate pathway, which leads to the biosynthesis of aromatic amino acids. Catalyzes the cis-dehydration of 3-dehydroquinate (DHQ) and introduces the first double bond of the aromatic ring to yield 3-dehydroshikimate. This Escherichia coli (strain 55989 / EAEC) protein is 3-dehydroquinate dehydratase.